The following is a 288-amino-acid chain: tRNA (guanine-N(1)-)-methyltransferase (288 aa).

Positions 82–105 are disordered; it reads ATDAVDTSDPGDSAAPDSSAPSGA. Residues 89-105 are compositionally biased toward low complexity; sequence SDPGDSAAPDSSAPSGA. S-adenosyl-L-methionine contacts are provided by residues G137 and 162–167; that span reads IGDYVL.

It belongs to the RNA methyltransferase TrmD family. Homodimer.

It is found in the cytoplasm. It carries out the reaction guanosine(37) in tRNA + S-adenosyl-L-methionine = N(1)-methylguanosine(37) in tRNA + S-adenosyl-L-homocysteine + H(+). Specifically methylates guanosine-37 in various tRNAs. This is tRNA (guanine-N(1)-)-methyltransferase from Bifidobacterium longum (strain DJO10A).